Consider the following 582-residue polypeptide: ATP-dependent lipid A-core flippase (582 aa).

5 helical membrane-spanning segments follow: residues 16 to 36 (LWPHISLYKAGLGVAVVALVI), 69 to 89 (FIILAMMFIRGLSGFVSGYCM), 153 to 173 (IIGLLGLMFWNSWQLSLVLVV), 250 to 270 (LANPIIQMIASFALVTVLYLA), and 275 to 295 (IKETLTPGTFTVVFSAMFGLL). One can recognise an ABC transmembrane type-1 domain in the interval 29-310 (VAVVALVINA…LTSVTSDFQR (282 aa)). The region spanning 342-578 (IKVDNVTFTY…DGAYAQLHRI (237 aa)) is the ABC transporter domain. Residue 376–383 (GRSGSGKS) coordinates ATP.

This sequence belongs to the ABC transporter superfamily. Lipid exporter (TC 3.A.1.106) family. As to quaternary structure, homodimer.

The protein resides in the cell inner membrane. It catalyses the reaction ATP + H2O + lipid A-core oligosaccharideSide 1 = ADP + phosphate + lipid A-core oligosaccharideSide 2.. In terms of biological role, involved in lipopolysaccharide (LPS) biosynthesis. Translocates lipid A-core from the inner to the outer leaflet of the inner membrane. Transmembrane domains (TMD) form a pore in the inner membrane and the ATP-binding domain (NBD) is responsible for energy generation. This is ATP-dependent lipid A-core flippase from Aliivibrio fischeri (strain ATCC 700601 / ES114) (Vibrio fischeri).